The following is a 95-amino-acid chain: Acylphosphatase (95 aa).

In terms of domain architecture, Acylphosphatase-like spans 7 to 93 (TWQLFAHGRV…QLFDRFDWLP (87 aa)). Active-site residues include Arg22 and Asn40.

This sequence belongs to the acylphosphatase family.

The enzyme catalyses an acyl phosphate + H2O = a carboxylate + phosphate + H(+). This Cupriavidus metallidurans (strain ATCC 43123 / DSM 2839 / NBRC 102507 / CH34) (Ralstonia metallidurans) protein is Acylphosphatase (acyP).